The following is a 268-amino-acid chain: Ubiquinone biosynthesis protein COQ4 homolog, mitochondrial (268 aa).

Residues H171, D172, H175, and E187 each coordinate Zn(2+).

This sequence belongs to the COQ4 family. In terms of assembly, component of a multi-subunit COQ enzyme complex. The cofactor is Zn(2+).

It is found in the mitochondrion inner membrane. It carries out the reaction a 4-hydroxy-3-methoxy-5-(all-trans-polyprenyl)benzoate + H(+) = a 2-methoxy-6-(all-trans-polyprenyl)phenol + CO2. Its pathway is cofactor biosynthesis; ubiquinone biosynthesis. Functionally, lyase that catalyzes the C1-decarboxylation of 4-hydroxy-3-methoxy-5-(all-trans-polyprenyl)benzoic acid into 2-methoxy-6-(all-trans-polyprenyl)phenol during ubiquinone biosynthesis. The protein is Ubiquinone biosynthesis protein COQ4 homolog, mitochondrial of Drosophila sechellia (Fruit fly).